Consider the following 332-residue polypeptide: Methionine synthase (332 aa).

Zn(2+) is bound by residues His-211, Cys-213, and Cys-296.

Belongs to the archaeal MetE family. The cofactor is Zn(2+).

Its pathway is amino-acid biosynthesis; L-methionine biosynthesis via de novo pathway. Catalyzes the transfer of a methyl group to L-homocysteine resulting in methionine formation. The physiological methyl donor is unknown. This Saccharolobus islandicus (strain L.S.2.15 / Lassen #1) (Sulfolobus islandicus) protein is Methionine synthase.